The following is a 112-amino-acid chain: MSCQIYPSQMCPGKAYKNCKLNIMNFWEVICIYYFALQGSFLGILVNLPILVTTLPLLPPALFFYLMYLFALPLKDIFNIFFPSLDPILIPILIFFLVGVSRARLSKVFKWR.

A run of 3 helical transmembrane segments spans residues 26–46 (FWEVICIYYFALQGSFLGILV), 50–70 (ILVTTLPLLPPALFFYLMYLF), and 80–100 (IFFPSLDPILIPILIFFLVGV).

It is found in the host membrane. In Acidianus convivator (ABV), this protein is Putative transmembrane protein ORF112.